The following is a 316-amino-acid chain: Taste receptor type 2 member 3 (316 aa).

The Extracellular segment spans residues 1-7 (MLGFTEG). A helical transmembrane segment spans residues 8–28 (IFLVLTVTEFILGNLVNGFIV). The Cytoplasmic segment spans residues 29–50 (SVNGSHWFKSKKISLSDFIITS). The chain crosses the membrane as a helical span at residues 51 to 71 (LALFRIFLLWIIFTDSLIIVF). Residues 72 to 86 (SYHTHDSGIRMQLID) lie on the Extracellular side of the membrane. Residues 87-107 (VFWTFTNHFSIWLISCLSVFY) form a helical membrane-spanning segment. Residues 108-128 (CLKIATFSHPSFLWLKWRASR) are Cytoplasmic-facing. Residues 129–149 (VVVGMLWGALVLSCVCTMSLM) form a helical membrane-spanning segment. The Extracellular portion of the chain corresponds to 150–186 (NEFKIYSALTGSRDTQNMTEYIRLKRHEYNLMHVLGN). Asn-166 is a glycosylation site (N-linked (GlcNAc...) asparagine). The helical transmembrane segment at 187 to 207 (LWKIPSLIVSLIAYFLLLLSL) threads the bilayer. Over 208 to 234 (GKHTQQMQKYSVGSRDQSAEAHRRAMR) the chain is Cytoplasmic. Residues 235–255 (IILSFLLFFLFYFLSFVILSS) form a helical membrane-spanning segment. Topologically, residues 256–266 (SRFLPETKIAR) are extracellular. A helical transmembrane segment spans residues 267-287 (IIGVVITMSYLVGDSLILILG). The Cytoplasmic portion of the chain corresponds to 288–316 (NNKLKQTFVAILPCECGHPKPGSKRFFAS).

The protein belongs to the G-protein coupled receptor T2R family.

The protein resides in the membrane. In terms of biological role, gustducin-coupled receptor implicated in the perception of bitter compounds in the oral cavity and the gastrointestinal tract. Signals through PLCB2 and the calcium-regulated cation channel TRPM5. The protein is Taste receptor type 2 member 3 of Rattus norvegicus (Rat).